The sequence spans 592 residues: A-type ATP synthase subunit A (592 aa).

233–240 is a binding site for ATP; that stretch reads GPFGSGKT.

This sequence belongs to the ATPase alpha/beta chains family. In terms of assembly, has multiple subunits with at least A(3), B(3), C, D, E, F, H, I and proteolipid K(x).

It is found in the cell membrane. It catalyses the reaction ATP + H2O + 4 H(+)(in) = ADP + phosphate + 5 H(+)(out). In terms of biological role, component of the A-type ATP synthase that produces ATP from ADP in the presence of a proton gradient across the membrane. The A chain is the catalytic subunit. The chain is A-type ATP synthase subunit A from Saccharolobus islandicus (strain L.S.2.15 / Lassen #1) (Sulfolobus islandicus).